Reading from the N-terminus, the 98-residue chain is MYSSIMSLVFLLPIVAVVNLISNQSHFLMTLLSLEGITLSLVLFVPISLSIMSASNVSISVILLTFGACEASLGLSLMVLMSRSYGTDMLNSLTANKC.

3 consecutive transmembrane segments (helical) span residues 1–21 (MYSS…VNLI), 27–47 (FLMT…FVPI), and 61–81 (VILL…MVLM).

This sequence belongs to the complex I subunit 4L family.

The protein resides in the mitochondrion membrane. It carries out the reaction a ubiquinone + NADH + 5 H(+)(in) = a ubiquinol + NAD(+) + 4 H(+)(out). Functionally, core subunit of the mitochondrial membrane respiratory chain NADH dehydrogenase (Complex I) that is believed to belong to the minimal assembly required for catalysis. Complex I functions in the transfer of electrons from NADH to the respiratory chain. The immediate electron acceptor for the enzyme is believed to be ubiquinone. The protein is NADH-ubiquinone oxidoreductase chain 4L (ND4L) of Lumbricus terrestris (Common earthworm).